A 331-amino-acid polypeptide reads, in one-letter code: Adenosine deaminase (331 aa).

Zn(2+) contacts are provided by histidine 12 and histidine 14. Residues histidine 14 and aspartate 16 each contribute to the substrate site. Position 197 (histidine 197) interacts with Zn(2+). Glutamate 200 (proton donor) is an active-site residue. Aspartate 278 contributes to the Zn(2+) binding site.

The protein belongs to the metallo-dependent hydrolases superfamily. Adenosine and AMP deaminases family. Adenosine deaminase subfamily. Zn(2+) serves as cofactor.

The enzyme catalyses adenosine + H2O + H(+) = inosine + NH4(+). It catalyses the reaction 2'-deoxyadenosine + H2O + H(+) = 2'-deoxyinosine + NH4(+). Its function is as follows. Catalyzes the hydrolytic deamination of adenosine and 2-deoxyadenosine. The protein is Adenosine deaminase of Shewanella pealeana (strain ATCC 700345 / ANG-SQ1).